The chain runs to 212 residues: Deoxyribose-phosphate aldolase (212 aa).

Asp89 (proton donor/acceptor) is an active-site residue. Lys151 acts as the Schiff-base intermediate with acetaldehyde in catalysis. The active-site Proton donor/acceptor is the Lys180.

The protein belongs to the DeoC/FbaB aldolase family. DeoC type 1 subfamily.

It is found in the cytoplasm. It carries out the reaction 2-deoxy-D-ribose 5-phosphate = D-glyceraldehyde 3-phosphate + acetaldehyde. The protein operates within carbohydrate degradation; 2-deoxy-D-ribose 1-phosphate degradation; D-glyceraldehyde 3-phosphate and acetaldehyde from 2-deoxy-alpha-D-ribose 1-phosphate: step 2/2. In terms of biological role, catalyzes a reversible aldol reaction between acetaldehyde and D-glyceraldehyde 3-phosphate to generate 2-deoxy-D-ribose 5-phosphate. The sequence is that of Deoxyribose-phosphate aldolase from Clostridium botulinum (strain Langeland / NCTC 10281 / Type F).